A 317-amino-acid polypeptide reads, in one-letter code: Beta-ketoacyl-[acyl-carrier-protein] synthase III (317 aa).

Active-site residues include cysteine 112 and histidine 244. Residues 245–249 (QANIR) are ACP-binding. Asparagine 274 is a catalytic residue.

Belongs to the thiolase-like superfamily. FabH family. Homodimer.

The protein resides in the cytoplasm. The enzyme catalyses malonyl-[ACP] + acetyl-CoA + H(+) = 3-oxobutanoyl-[ACP] + CO2 + CoA. It participates in lipid metabolism; fatty acid biosynthesis. Its function is as follows. Catalyzes the condensation reaction of fatty acid synthesis by the addition to an acyl acceptor of two carbons from malonyl-ACP. Catalyzes the first condensation reaction which initiates fatty acid synthesis and may therefore play a role in governing the total rate of fatty acid production. Possesses both acetoacetyl-ACP synthase and acetyl transacylase activities. Its substrate specificity determines the biosynthesis of branched-chain and/or straight-chain of fatty acids. The polypeptide is Beta-ketoacyl-[acyl-carrier-protein] synthase III (Rickettsia typhi (strain ATCC VR-144 / Wilmington)).